We begin with the raw amino-acid sequence, 110 residues long: Large ribosomal subunit protein uL22 (110 aa).

It belongs to the universal ribosomal protein uL22 family. In terms of assembly, part of the 50S ribosomal subunit.

In terms of biological role, this protein binds specifically to 23S rRNA; its binding is stimulated by other ribosomal proteins, e.g. L4, L17, and L20. It is important during the early stages of 50S assembly. It makes multiple contacts with different domains of the 23S rRNA in the assembled 50S subunit and ribosome. The globular domain of the protein is located near the polypeptide exit tunnel on the outside of the subunit, while an extended beta-hairpin is found that lines the wall of the exit tunnel in the center of the 70S ribosome. The protein is Large ribosomal subunit protein uL22 of Hydrogenovibrio crunogenus (strain DSM 25203 / XCL-2) (Thiomicrospira crunogena).